We begin with the raw amino-acid sequence, 536 residues long: CTP synthase (536 aa).

The segment at 1–267 (MSKFVFVTGG…CKETLKYLDL (267 aa)) is amidoligase domain. Position 13 (serine 13) interacts with CTP. Serine 13 is a UTP binding site. ATP-binding positions include 14-19 (SIGKGI) and aspartate 71. Mg(2+)-binding residues include aspartate 71 and glutamate 141. CTP contacts are provided by residues 148–150 (DIE), 188–193 (KTKPTQ), and lysine 224. Residues 188-193 (KTKPTQ) and lysine 224 contribute to the UTP site. Positions 292–534 (KVALVGKYIE…IKASQDKLTQ (243 aa)) constitute a Glutamine amidotransferase type-1 domain. Glycine 354 is an L-glutamine binding site. Cysteine 381 (nucleophile; for glutamine hydrolysis) is an active-site residue. L-glutamine is bound by residues 382 to 385 (LGMQ), glutamate 405, and arginine 462. Residues histidine 507 and glutamate 509 contribute to the active site.

The protein belongs to the CTP synthase family. As to quaternary structure, homotetramer.

It carries out the reaction UTP + L-glutamine + ATP + H2O = CTP + L-glutamate + ADP + phosphate + 2 H(+). The catalysed reaction is L-glutamine + H2O = L-glutamate + NH4(+). The enzyme catalyses UTP + NH4(+) + ATP = CTP + ADP + phosphate + 2 H(+). It functions in the pathway pyrimidine metabolism; CTP biosynthesis via de novo pathway; CTP from UDP: step 2/2. With respect to regulation, allosterically activated by GTP, when glutamine is the substrate; GTP has no effect on the reaction when ammonia is the substrate. The allosteric effector GTP functions by stabilizing the protein conformation that binds the tetrahedral intermediate(s) formed during glutamine hydrolysis. Inhibited by the product CTP, via allosteric rather than competitive inhibition. Catalyzes the ATP-dependent amination of UTP to CTP with either L-glutamine or ammonia as the source of nitrogen. Regulates intracellular CTP levels through interactions with the four ribonucleotide triphosphates. In Prochlorococcus marinus (strain AS9601), this protein is CTP synthase.